Consider the following 248-residue polypeptide: Granulin (248 aa).

This sequence belongs to the polyhedrin family.

In terms of biological role, component of the virus occlusion bodies, which are large proteinaceous structures, that protect the virus from the outside environment for extended periods until they are ingested by insect larvae. The protein is Granulin of Adoxophyes orana granulovirus (AoGV).